The primary structure comprises 156 residues: MPKESGRKVVATNRKARHNYHVMDTYEAGIALMGTEVKSLREGHASMVDGFCTFYNDELWMEGIHIPEYHQGSWTNHAARRRRKLLLHRDELDKISQKIRESGFTVVPLQLYFLDGRAKVEIAIARGKKDYDKRQTLREQQDKRESLRELRERNRR.

Residues 134 to 156 (RQTLREQQDKRESLRELRERNRR) are disordered.

This sequence belongs to the SmpB family.

It is found in the cytoplasm. In terms of biological role, required for rescue of stalled ribosomes mediated by trans-translation. Binds to transfer-messenger RNA (tmRNA), required for stable association of tmRNA with ribosomes. tmRNA and SmpB together mimic tRNA shape, replacing the anticodon stem-loop with SmpB. tmRNA is encoded by the ssrA gene; the 2 termini fold to resemble tRNA(Ala) and it encodes a 'tag peptide', a short internal open reading frame. During trans-translation Ala-aminoacylated tmRNA acts like a tRNA, entering the A-site of stalled ribosomes, displacing the stalled mRNA. The ribosome then switches to translate the ORF on the tmRNA; the nascent peptide is terminated with the 'tag peptide' encoded by the tmRNA and targeted for degradation. The ribosome is freed to recommence translation, which seems to be the essential function of trans-translation. In Paenarthrobacter aurescens (strain TC1), this protein is SsrA-binding protein.